Here is a 731-residue protein sequence, read N- to C-terminus: Bifunctional trehalose-6-phosphate synthase/phosphatase (731 aa).

Residues 1 to 464 (MRLIVVSNRL…WGTDFIYSLI (464 aa)) form an alpha,alpha-trehalose-phosphate synthase region. A D-glucose 6-phosphate-binding site is contributed by Arg9. A UDP-alpha-D-glucose-binding site is contributed by 25–26 (GG). 2 residues coordinate D-glucose 6-phosphate: Tyr89 and Asp143. 2 residues coordinate UDP-alpha-D-glucose: Arg276 and Lys281. Position 314 (Arg314) interacts with D-glucose 6-phosphate. A UDP-alpha-D-glucose-binding site is contributed by 379–383 (LVAKE). The tract at residues 465–731 (SAKSAREEVE…RSLLEQLRPP (267 aa)) is trehalose-6-phosphate phosphatase. Asp503 serves as the catalytic Nucleophile. Residues Asp503, Asp505, and Asp684 each coordinate Mg(2+). 503 to 505 (DYD) is an alpha,alpha-trehalose 6-phosphate binding site.

The protein in the N-terminal section; belongs to the glycosyltransferase 20 family. It in the C-terminal section; belongs to the trehalose phosphatase family. As to quaternary structure, may interact with the putative glycosyltransferase (GT) TTX_1305. TTX_1305 is required for the trehalose-6-phosphate synthase activity of tpsp. The cofactor is Mg(2+).

It catalyses the reaction D-glucose 6-phosphate + UDP-alpha-D-glucose = alpha,alpha-trehalose 6-phosphate + UDP + H(+). The enzyme catalyses alpha,alpha-trehalose 6-phosphate + H2O = alpha,alpha-trehalose + phosphate. Its pathway is glycan biosynthesis; trehalose biosynthesis. Its function is as follows. Bifunctional enzyme which catalyzes the transfer of glucose from UDP-alpha-D-glucose to glucose-6-phosphate to form trehalose-6-phosphate (Tre6P) and removes the phosphate from Tre6P to produce free trehalose. The chain is Bifunctional trehalose-6-phosphate synthase/phosphatase from Thermoproteus tenax (strain ATCC 35583 / DSM 2078 / JCM 9277 / NBRC 100435 / Kra 1).